We begin with the raw amino-acid sequence, 840 residues long: Protein translocase subunit SecA (840 aa).

ATP is bound by residues Gln85, 103 to 107 (GEGKT), and Asp492. Residues 787–822 (QRERVAKETGASHGGDSQEVKKKPVKKEPKVGRNDL) form a disordered region. A compositionally biased stretch (basic and acidic residues) spans 802 to 819 (DSQEVKKKPVKKEPKVGR). Zn(2+)-binding residues include Cys823, Cys825, Cys834, and Cys835.

The protein belongs to the SecA family. In terms of assembly, monomer and homodimer. Part of the essential Sec protein translocation apparatus which comprises SecA, SecYEG and auxiliary proteins SecDF. Other proteins may also be involved. The cofactor is Zn(2+).

It localises to the cell membrane. The protein localises to the cytoplasm. The enzyme catalyses ATP + H2O + cellular proteinSide 1 = ADP + phosphate + cellular proteinSide 2.. In terms of biological role, part of the Sec protein translocase complex. Interacts with the SecYEG preprotein conducting channel. Has a central role in coupling the hydrolysis of ATP to the transfer of proteins into and across the cell membrane, serving as an ATP-driven molecular motor driving the stepwise translocation of polypeptide chains across the membrane. This is Protein translocase subunit SecA from Clostridium perfringens (strain ATCC 13124 / DSM 756 / JCM 1290 / NCIMB 6125 / NCTC 8237 / Type A).